The following is a 395-amino-acid chain: Major outer membrane porin, serovar F (395 aa).

Positions 1–22 (MKKLLKSVLVFAALSSASSLQA) are cleaved as a signal peptide.

The protein belongs to the chlamydial porin (CP) (TC 1.B.2) family. As to quaternary structure, part of a disulfide cross-linked outer membrane complex (COMC) composed of the major outer membrane porin (MOMP), the small cysteine-rich protein (OmcA) and the large cysteine-rich periplasmic protein (OmcB).

The protein resides in the cell outer membrane. Functionally, in elementary bodies (EBs, the infectious stage, which is able to survive outside the host cell) provides the structural integrity of the outer envelope through disulfide cross-links with the small cysteine-rich protein and the large cysteine-rich periplasmic protein. It has been described in publications as the Sarkosyl-insoluble COMC (Chlamydia outer membrane complex), and serves as the functional equivalent of peptidoglycan. Its function is as follows. Permits diffusion of specific solutes through the outer membrane. The polypeptide is Major outer membrane porin, serovar F (ompA) (Chlamydia trachomatis).